The sequence spans 251 residues: Ubiquinone/menaquinone biosynthesis C-methyltransferase UbiE (251 aa).

S-adenosyl-L-methionine-binding positions include Thr74, Asp95, 123-124, and Ser140; that span reads NA.

It belongs to the class I-like SAM-binding methyltransferase superfamily. MenG/UbiE family.

It carries out the reaction a 2-demethylmenaquinol + S-adenosyl-L-methionine = a menaquinol + S-adenosyl-L-homocysteine + H(+). The enzyme catalyses a 2-methoxy-6-(all-trans-polyprenyl)benzene-1,4-diol + S-adenosyl-L-methionine = a 5-methoxy-2-methyl-3-(all-trans-polyprenyl)benzene-1,4-diol + S-adenosyl-L-homocysteine + H(+). The protein operates within quinol/quinone metabolism; menaquinone biosynthesis; menaquinol from 1,4-dihydroxy-2-naphthoate: step 2/2. Its pathway is cofactor biosynthesis; ubiquinone biosynthesis. In terms of biological role, methyltransferase required for the conversion of demethylmenaquinol (DMKH2) to menaquinol (MKH2) and the conversion of 2-polyprenyl-6-methoxy-1,4-benzoquinol (DDMQH2) to 2-polyprenyl-3-methyl-6-methoxy-1,4-benzoquinol (DMQH2). This is Ubiquinone/menaquinone biosynthesis C-methyltransferase UbiE from Proteus mirabilis (strain HI4320).